A 334-amino-acid polypeptide reads, in one-letter code: N-acetyl-gamma-glutamyl-phosphate reductase (334 aa).

The active site involves cysteine 154.

The protein belongs to the NAGSA dehydrogenase family. Type 1 subfamily.

The protein resides in the cytoplasm. The enzyme catalyses N-acetyl-L-glutamate 5-semialdehyde + phosphate + NADP(+) = N-acetyl-L-glutamyl 5-phosphate + NADPH + H(+). It functions in the pathway amino-acid biosynthesis; L-arginine biosynthesis; N(2)-acetyl-L-ornithine from L-glutamate: step 3/4. Its function is as follows. Catalyzes the NADPH-dependent reduction of N-acetyl-5-glutamyl phosphate to yield N-acetyl-L-glutamate 5-semialdehyde. The protein is N-acetyl-gamma-glutamyl-phosphate reductase of Escherichia coli O6:H1 (strain CFT073 / ATCC 700928 / UPEC).